Consider the following 293-residue polypeptide: Transcription elongation factor S-II (293 aa).

Residues 4 to 81 form the TFIIS N-terminal domain; the sequence is ADIRSAKAAL…KKWKADVSKG (78 aa). Residues 81 to 123 are disordered; that stretch reads GRPLKTTTTTSSTPSKHADVGSQAQKQVQKQSSSGQRTFKSDN. The segment covering 100-116 has biased composition (low complexity); the sequence is VGSQAQKQVQKQSSSGQ. The TFIIS central domain maps to 133 to 248; it reads IRNNCIGLMY…HAQGAKPQKA (116 aa). The TFIIS-type zinc-finger motif lies at 251 to 291; it reads DLFTCGKCKQKKVSYYQMQTRSADEPMTTFCECTVCGNRWK. Residues C255, C258, C283, and C286 each coordinate Zn(2+).

It belongs to the TFS-II family.

The protein localises to the nucleus. Necessary for efficient RNA polymerase II transcription elongation past template-encoded arresting sites. The arresting sites in DNA have the property of trapping a certain fraction of elongating RNA polymerases that pass through, resulting in locked ternary complexes. Cleavage of the nascent transcript by S-II allows the resumption of elongation from the new 3'-terminus. This chain is Transcription elongation factor S-II (tfs1), found in Schizosaccharomyces pombe (strain 972 / ATCC 24843) (Fission yeast).